The primary structure comprises 101 residues: uncharacterized protein (101 aa).

The next 2 membrane-spanning stretches (helical) occupy residues 52–72 (VVFIIVFLTGWAAKSIIVKLL) and 75–95 (LWRLSTLIPSFFASFFMSLLG).

The protein resides in the endoplasmic reticulum membrane. This is an uncharacterized protein from Schizosaccharomyces pombe (strain 972 / ATCC 24843) (Fission yeast).